The following is a 409-amino-acid chain: Histidine--tRNA ligase (409 aa).

It belongs to the class-II aminoacyl-tRNA synthetase family. In terms of assembly, homodimer.

It localises to the cytoplasm. It catalyses the reaction tRNA(His) + L-histidine + ATP = L-histidyl-tRNA(His) + AMP + diphosphate + H(+). This chain is Histidine--tRNA ligase, found in Campylobacter fetus subsp. fetus (strain 82-40).